The chain runs to 662 residues: UPF0313 protein CPF_1407 (662 aa).

The Radical SAM core domain occupies 296 to 567 (AIEEVKFSIV…AMQRALLQFK (272 aa)). The [4Fe-4S] cluster site is built by cysteine 310, cysteine 314, and cysteine 317. The disordered stretch occupies residues 596 to 662 (IRDKNSFGKG…QRSSKGKKRR (67 aa)). Over residues 618–632 (SRNENSGRRESEDKK) the composition is skewed to basic and acidic residues. A compositionally biased stretch (basic residues) spans 633-644 (RSSHSKKQRGNK).

This sequence belongs to the UPF0313 family. It depends on [4Fe-4S] cluster as a cofactor.

In Clostridium perfringens (strain ATCC 13124 / DSM 756 / JCM 1290 / NCIMB 6125 / NCTC 8237 / Type A), this protein is UPF0313 protein CPF_1407.